Consider the following 501-residue polypeptide: Solute carrier family 2, facilitated glucose transporter member 5 (501 aa).

An N-acetylmethionine modification is found at methionine 1. Topologically, residues 1–18 (MEPQDPVKREGRLTPVIV) are cytoplasmic. The chain crosses the membrane as a helical span at residues 19–39 (LATLIAAFGSSFQYGYNVATI). D-fructose is bound at residue tyrosine 32. The Extracellular portion of the chain corresponds to 40 to 68 (NSPSEFMKDFYNYTYYDRVGEYMNEFYLT). Asparagine 51 carries an N-linked (GlcNAc...) asparagine glycan. The helical transmembrane segment at 69–91 (LLWSVTVSMFPFGGFLGSLMVGP) threads the bilayer. The Cytoplasmic segment spans residues 92-98 (LVNNLGR). Residues 99–119 (KGTLLFNNIFSIVPALLMGFS) traverse the membrane as a helical segment. Residues 120–126 (DLAKSFE) lie on the Extracellular side of the membrane. A helical membrane pass occupies residues 127-149 (MIIVARVLVGICAGLSSNVVPMY). The Cytoplasmic portion of the chain corresponds to 150 to 161 (LGELAPKNWRGA). A helical transmembrane segment spans residues 162–182 (LGVVPQLFITIGILVAQIFGL). Glutamine 167 is a binding site for D-fructose. Topologically, residues 183 to 192 (RSLLANEEGW) are extracellular. Residues 193 to 213 (PILLGLTGIPAVLQLLFLPFF) form a helical membrane-spanning segment. The Cytoplasmic segment spans residues 214-277 (PESPRYLLIQ…LFKMRSLRWQ (64 aa)). The helical transmembrane segment at 278–298 (VISIIVLMAGQQLSGVNAIYY) threads the bilayer. D-fructose contacts are provided by residues glutamine 288 and 296 to 298 (IYY). Residues 299-313 (YADQIYLSAGVKEDD) lie on the Extracellular side of the membrane. Residues 314–334 (VQYVTAGTGAVNVLITVCAIF) form a helical membrane-spanning segment. Over 335–342 (VVELMGRR) the chain is Cytoplasmic. The helical transmembrane segment at 343–363 (FLLLLGFSVCFTACCVLTGAL) threads the bilayer. At 364-371 (AMQDVISW) the chain is on the extracellular side. The chain crosses the membrane as a helical span at residues 372 to 394 (MPYVSIACVISYVIGHALGPSPI). Residue histidine 387 coordinates D-fructose. At 395-412 (PALLVTEIFLQSSRPAAY) the chain is on the cytoplasmic side. A helical membrane pass occupies residues 413–433 (MVAGTVHWLSNFTVGLVFPFI). A D-fructose-binding site is contributed by 419–420 (HW). Residues 434–439 (QVGLGA) lie on the Extracellular side of the membrane. A helical transmembrane segment spans residues 440–460 (YSFVIFAVICFLTTVYIFLII). The Cytoplasmic portion of the chain corresponds to 461–501 (PETKSKTFIEINQIFIKMNKVPGVHPEKEELKEFPPSTARQ).

It belongs to the major facilitator superfamily. Sugar transporter (TC 2.A.1.1) family. Glucose transporter subfamily.

It localises to the apical cell membrane. The protein localises to the cell membrane. It is found in the sarcolemma. It catalyses the reaction D-fructose(out) = D-fructose(in). Its function is as follows. Functions as a fructose transporter that has only low activity with other monosaccharides. Can mediate the uptake of deoxyglucose, but with low efficiency. Essential for fructose uptake in the small intestine. Plays a role in the regulation of salt uptake and blood pressure in response to dietary fructose. Required for the development of high blood pressure in response to high dietary fructose intake. The protein is Solute carrier family 2, facilitated glucose transporter member 5 of Ovis aries (Sheep).